The chain runs to 312 residues: 4-hydroxy-3-methylbut-2-enyl diphosphate reductase (312 aa).

Cysteine 15 serves as a coordination point for [4Fe-4S] cluster. Residues histidine 44 and histidine 77 each coordinate (2E)-4-hydroxy-3-methylbut-2-enyl diphosphate. Residues histidine 44 and histidine 77 each coordinate dimethylallyl diphosphate. The isopentenyl diphosphate site is built by histidine 44 and histidine 77. Cysteine 99 contacts [4Fe-4S] cluster. Histidine 127 provides a ligand contact to (2E)-4-hydroxy-3-methylbut-2-enyl diphosphate. Histidine 127 lines the dimethylallyl diphosphate pocket. Histidine 127 contacts isopentenyl diphosphate. Glutamate 129 (proton donor) is an active-site residue. Position 167 (threonine 167) interacts with (2E)-4-hydroxy-3-methylbut-2-enyl diphosphate. Cysteine 197 is a [4Fe-4S] cluster binding site. Positions 225, 226, 227, and 269 each coordinate (2E)-4-hydroxy-3-methylbut-2-enyl diphosphate. Residues serine 225, serine 226, asparagine 227, and serine 269 each contribute to the dimethylallyl diphosphate site. Serine 225, serine 226, asparagine 227, and serine 269 together coordinate isopentenyl diphosphate.

It belongs to the IspH family. The cofactor is [4Fe-4S] cluster.

The enzyme catalyses isopentenyl diphosphate + 2 oxidized [2Fe-2S]-[ferredoxin] + H2O = (2E)-4-hydroxy-3-methylbut-2-enyl diphosphate + 2 reduced [2Fe-2S]-[ferredoxin] + 2 H(+). The catalysed reaction is dimethylallyl diphosphate + 2 oxidized [2Fe-2S]-[ferredoxin] + H2O = (2E)-4-hydroxy-3-methylbut-2-enyl diphosphate + 2 reduced [2Fe-2S]-[ferredoxin] + 2 H(+). It functions in the pathway isoprenoid biosynthesis; dimethylallyl diphosphate biosynthesis; dimethylallyl diphosphate from (2E)-4-hydroxy-3-methylbutenyl diphosphate: step 1/1. The protein operates within isoprenoid biosynthesis; isopentenyl diphosphate biosynthesis via DXP pathway; isopentenyl diphosphate from 1-deoxy-D-xylulose 5-phosphate: step 6/6. Its function is as follows. Catalyzes the conversion of 1-hydroxy-2-methyl-2-(E)-butenyl 4-diphosphate (HMBPP) into a mixture of isopentenyl diphosphate (IPP) and dimethylallyl diphosphate (DMAPP). Acts in the terminal step of the DOXP/MEP pathway for isoprenoid precursor biosynthesis. The protein is 4-hydroxy-3-methylbut-2-enyl diphosphate reductase of Aromatoleum aromaticum (strain DSM 19018 / LMG 30748 / EbN1) (Azoarcus sp. (strain EbN1)).